The chain runs to 451 residues: MWSPEREAQAPTGGDPAGLLPPEWEEDEERMSFLFSAFKRSREVNSTDWDSKMGFWAPLVLSHSRRQGVVRLRLRDLQEAFQRKGSVPLGLATVLQDLLRRGELQRESDFMASVDSSWISWGVGVFLLKPLKWTLSNMLGDHKVPAEEVLVAVELLKEKAEEVYRLYQNSPLSSHPVVALSELSALCANSCPDERTFYLVLLQLQKEKRVTVLEQNGEKIVKFARGPHAKVSPVNDVDVGVYQLMQSEQLLSRKVESLSQESERCKEEARRACRAGKKQLALRSLKAKQRTEKRIEALHAKLDTVQGILDRIYASQTDQMVFNAYQAGVGALKLSMKDVTVEKAESLVDQIQELCDTQDEVSQTLAGGVTNGLDFDSEELEKELDILLQDTTTEPLSLLETPQETTLYTNSVPKPRILDAELEAELEKLSLSEGGLIPSSKSPKRQLEPTL.

Residues Met1–Pro22 form a disordered region. Residue Ser232 is modified to Phosphoserine. Residues Glu248 to Ile312 are a coiled coil. Thr409 is subject to Phosphothreonine. Ser411, Ser432, and Ser442 each carry phosphoserine. The disordered stretch occupies residues Leu431 to Leu451.

The protein belongs to the SNF7 family. As to quaternary structure, interacts with CHMP4B, but not with VPS25. Interacts with LEMD2 (via C-terminus).

The protein localises to the cytoplasm. Its subcellular location is the nucleus envelope. In terms of biological role, ESCRT-III-like protein required to recruit the ESCRT-III complex to the nuclear envelope (NE) during late anaphase. Together with SPAST, the ESCRT-III complex promotes NE sealing and mitotic spindle disassembly during late anaphase. Recruited to the reforming NE during anaphase by LEMD2. Plays a role in the endosomal sorting pathway. In Mus musculus (Mouse), this protein is Charged multivesicular body protein 7 (Chmp7).